The following is a 329-amino-acid chain: DNA-directed RNA polymerase subunit alpha (329 aa).

The tract at residues 1–233 (MVREKVKVST…NLFIPFLHVE (233 aa)) is alpha N-terminal domain (alpha-NTD). Residues 266–329 (TKELAFQYIF…KKILDILEKK (64 aa)) are alpha C-terminal domain (alpha-CTD).

Belongs to the RNA polymerase alpha chain family. In terms of assembly, in plastids the minimal PEP RNA polymerase catalytic core is composed of four subunits: alpha, beta, beta', and beta''. When a (nuclear-encoded) sigma factor is associated with the core the holoenzyme is formed, which can initiate transcription.

It is found in the plastid. It localises to the chloroplast. It carries out the reaction RNA(n) + a ribonucleoside 5'-triphosphate = RNA(n+1) + diphosphate. Its function is as follows. DNA-dependent RNA polymerase catalyzes the transcription of DNA into RNA using the four ribonucleoside triphosphates as substrates. This chain is DNA-directed RNA polymerase subunit alpha, found in Arabidopsis thaliana (Mouse-ear cress).